Consider the following 80-residue polypeptide: Exodeoxyribonuclease 7 small subunit (80 aa).

The protein belongs to the XseB family. As to quaternary structure, heterooligomer composed of large and small subunits.

Its subcellular location is the cytoplasm. It carries out the reaction Exonucleolytic cleavage in either 5'- to 3'- or 3'- to 5'-direction to yield nucleoside 5'-phosphates.. Bidirectionally degrades single-stranded DNA into large acid-insoluble oligonucleotides, which are then degraded further into small acid-soluble oligonucleotides. This is Exodeoxyribonuclease 7 small subunit from Vibrio vulnificus (strain CMCP6).